Consider the following 468-residue polypeptide: Nuclear distribution protein PAC1-2 (468 aa).

One can recognise a LisH domain in the interval 13–45; it reads QAEELHKSIIAYLTSLNLATTANTLRAELNLPE. Residues 66 to 92 are a coiled coil; the sequence is SVIRLQKKVLDLQAENAHLKNEIENAG. 8 WD repeats span residues 118 to 159, 161 to 201, 205 to 251, 254 to 293, 298 to 358, 360 to 399, 404 to 429, and 430 to 468; these read GHRL…RTLK, HTKA…KNIR, GHDH…CVKT, GHNDWPRAVAPSADGRWLLSTGSDKAARLWDIGGTEPECR, GHEN…IKVL, GHDNWVRGLAFHPAGKFLISVADDRTMRCWDLSQDGKCVQ, MFDGFVSCVRWAPGITKDGLAGGDAG, and DGTPKKKTGAEANGGVQMRCVVATGSVDGTEGKVRIFAN.

The protein belongs to the WD repeat LIS1/nudF family. In terms of assembly, self-associates. Interacts with NDL1 and dynein.

It localises to the cytoplasm. The protein resides in the cytoskeleton. The protein localises to the spindle pole. Positively regulates the activity of the minus-end directed microtubule motor protein dynein. May enhance dynein-mediated microtubule sliding by targeting dynein to the microtubule plus end. Required for nuclear migration during vegetative growth as well as development. Required for retrograde early endosome (EE) transport from the hyphal tip. Required for localization of dynein to the mitotic spindle poles. Recruits additional proteins to the dynein complex at SPBs. The polypeptide is Nuclear distribution protein PAC1-2 (Podospora anserina (strain S / ATCC MYA-4624 / DSM 980 / FGSC 10383) (Pleurage anserina)).